A 406-amino-acid polypeptide reads, in one-letter code: 1-deoxy-D-xylulose 5-phosphate reductoisomerase (406 aa).

Positions 21, 22, 23, 24, 47, 50, and 127 each coordinate NADPH. 1-deoxy-D-xylulose 5-phosphate is bound at residue Lys-128. Position 129 (Glu-129) interacts with NADPH. Position 151 (Asp-151) interacts with Mn(2+). 1-deoxy-D-xylulose 5-phosphate-binding residues include Ser-152, Glu-153, Ser-177, and His-200. Glu-153 is a binding site for Mn(2+). Gly-206 serves as a coordination point for NADPH. 1-deoxy-D-xylulose 5-phosphate-binding residues include Ser-213, Asn-218, Lys-219, and Glu-222. Glu-222 is a Mn(2+) binding site.

It belongs to the DXR family. Mg(2+) serves as cofactor. Requires Mn(2+) as cofactor.

It carries out the reaction 2-C-methyl-D-erythritol 4-phosphate + NADP(+) = 1-deoxy-D-xylulose 5-phosphate + NADPH + H(+). Its pathway is isoprenoid biosynthesis; isopentenyl diphosphate biosynthesis via DXP pathway; isopentenyl diphosphate from 1-deoxy-D-xylulose 5-phosphate: step 1/6. Its function is as follows. Catalyzes the NADPH-dependent rearrangement and reduction of 1-deoxy-D-xylulose-5-phosphate (DXP) to 2-C-methyl-D-erythritol 4-phosphate (MEP). The protein is 1-deoxy-D-xylulose 5-phosphate reductoisomerase of Mycobacterium leprae (strain Br4923).